The sequence spans 340 residues: Beta-ketoacyl-[acyl-carrier-protein] synthase III (340 aa).

Residues Cys-119 and His-260 contribute to the active site. Positions Gln-261–Arg-265 are ACP-binding. The active site involves Asn-290.

It belongs to the thiolase-like superfamily. FabH family. As to quaternary structure, homodimer.

The protein resides in the cytoplasm. The enzyme catalyses malonyl-[ACP] + acetyl-CoA + H(+) = 3-oxobutanoyl-[ACP] + CO2 + CoA. It functions in the pathway lipid metabolism; fatty acid biosynthesis. Its function is as follows. Catalyzes the condensation reaction of fatty acid synthesis by the addition to an acyl acceptor of two carbons from malonyl-ACP. Catalyzes the first condensation reaction which initiates fatty acid synthesis and may therefore play a role in governing the total rate of fatty acid production. Possesses both acetoacetyl-ACP synthase and acetyl transacylase activities. Its substrate specificity determines the biosynthesis of branched-chain and/or straight-chain of fatty acids. The protein is Beta-ketoacyl-[acyl-carrier-protein] synthase III of Sulfurovum sp. (strain NBC37-1).